The sequence spans 280 residues: MPWRPPAHSVPGREGQFYAATFHAHAAFCGCGGFIEHLNSIHPRFLGAGGPPPPPPALRRALPAPEGPGGPPQHAPPNPPPEGDHQPPRRGGGAGGAGDGHAGDGDAAEEYGPEDLDLLFAAAAEDDMLSTTRARSPPTRYPSPVRSLESYKSVTRQGSDRKQFFTSGTKDVDCLQKEVLKECRNTHQMMKIFRQVLQSAQLSTPDPRAWPESKEAPTLFSGLSKTAKTRRRVKKKPLSSKNKHTKKKKRSYSSSSPSSKDNTSESSNEDSESCSETYSN.

Disordered stretches follow at residues 46 to 167 (LGAG…FFTS) and 200 to 280 (AQLS…TYSN). The segment covering 65 to 81 (PEGPGGPPQHAPPNPPP) has biased composition (pro residues). The span at 90-100 (RGGGAGGAGDG) shows a compositional bias: gly residues. The segment covering 106–117 (DAAEEYGPEDLD) has biased composition (acidic residues). Positions 227–251 (AKTRRRVKKKPLSSKNKHTKKKKRS) are enriched in basic residues. Low complexity predominate over residues 252–266 (YSSSSPSSKDNTSES).

Post-translationally, phosphorylated at C-terminal serines.

The chain is Probable protein VP2 from Homo sapiens (Human).